The primary structure comprises 537 residues: Pancreatic secretory granule membrane major glycoprotein GP2 (537 aa).

A signal peptide spans 1–28 (MPHLMERMVGSGLLWLALVSCILTQASA). Residues 41-60 (SYGLDLDCGAPGTPEAHVCF) are beta hairpin. 11 disulfides stabilise this stretch: C48/C59, C63/C157, C85/C172, C107/C145, C113/C177, C138/C146, C190/C200, C194/C209, C211/C241, C229/C320, and C261/C284. Residues 61–81 (DPCQNYTLLDEPFRSTENSAG) are D10C. Residue N65 is glycosylated (N-linked (GlcNAc...) (high mannose) asparagine). N88, N122, and N134 each carry an N-linked (GlcNAc...) asparagine glycan. Residues 186–230 (VEDKCEKACRPEEECLALNSTWGCFCRQDLNSSDVHSLQPQLDCG) enclose the EGF-like domain. Residues N204, N216, and N260 are each glycosylated (N-linked (GlcNAc...) asparagine). The interval 228 to 321 (DCGPREIKVK…TILNINFQCA (94 aa)) is ZP-N. A ZP domain is found at 228–484 (DCGPREIKVK…PSCSRSQVRS (257 aa)). N-linked (GlcNAc...) asparagine glycosylation is found at N291 and N342. The interval 322 to 345 (YPLDMKVSLQAALQPIVSSLNVSV) is flexible ZP-N/ZP-C linker. The tract at residues 346-357 (DGNGEFIVRMAL) is internal hydrophobic patch (IHP). The segment at 346-484 (DGNGEFIVRM…PSCSRSQVRS (139 aa)) is ZP-C. The N-linked (GlcNAc...) asparagine glycan is linked to N362. Disulfide bonds link C401/C461, C422/C477, and C466/C473. The tract at residues 491 to 499 (LARVLDLGP) is external hydrophobic patch (EHP). The GPI-anchor amidated asparagine moiety is linked to residue N512. A propeptide spans 513–537 (GTPSTAGFLVAWPMVLLTVLLAWLF) (removed in mature form).

Interacts with SYCN. Interacts with bacterial adhesin fimH. N-glycosylated. Glycosylated Asn-65 may be required for interaction with bacterial adhesin fimH. In terms of tissue distribution, expressed in pancreas (at protein level). Specifically expressed by M (microfold) cells which are atypical epithelial cells of the intestine (at protein level).

The protein localises to the zymogen granule membrane. It is found in the secreted. It localises to the cell membrane. The protein resides in the apical cell membrane. Its subcellular location is the membrane raft. The protein localises to the endosome. In terms of biological role, functions as an intestinal M-cell transcytotic receptor specific for type-I-piliated bacteria that participates in the mucosal immune response toward these bacteria. At the apical membrane of M-cells it binds fimH, a protein of the bacteria type I pilus tip. Internalizes bound bacteria, like E.coli and S.typhimurium, from the lumen of the intestine and delivers them, through M-cells, to the underlying organized lymphoid follicles where they are captured by antigen-presenting dendritic cells to elicit a mucosal immune response. The sequence is that of Pancreatic secretory granule membrane major glycoprotein GP2 from Homo sapiens (Human).